A 221-amino-acid chain; its full sequence is uncharacterized protein (221 aa).

Composition is skewed to low complexity over residues 1 to 27 (MNNN…NNNN) and 140 to 162 (TTTS…NSSS). Disordered regions lie at residues 1 to 28 (MNNN…NNNE) and 140 to 205 (TTTS…NIGG).

This is an uncharacterized protein from Dictyostelium discoideum (Social amoeba).